A 621-amino-acid chain; its full sequence is 1-deoxy-D-xylulose-5-phosphate synthase (621 aa).

Thiamine diphosphate is bound by residues histidine 80 and 121-123; that span reads GHS. Aspartate 152 is a Mg(2+) binding site. Thiamine diphosphate contacts are provided by residues 153–154, asparagine 181, tyrosine 288, and glutamate 370; that span reads GA. Asparagine 181 is a Mg(2+) binding site.

Belongs to the transketolase family. DXPS subfamily. Homodimer. Mg(2+) serves as cofactor. Thiamine diphosphate is required as a cofactor.

The enzyme catalyses D-glyceraldehyde 3-phosphate + pyruvate + H(+) = 1-deoxy-D-xylulose 5-phosphate + CO2. It functions in the pathway metabolic intermediate biosynthesis; 1-deoxy-D-xylulose 5-phosphate biosynthesis; 1-deoxy-D-xylulose 5-phosphate from D-glyceraldehyde 3-phosphate and pyruvate: step 1/1. Its function is as follows. Catalyzes the acyloin condensation reaction between C atoms 2 and 3 of pyruvate and glyceraldehyde 3-phosphate to yield 1-deoxy-D-xylulose-5-phosphate (DXP). The sequence is that of 1-deoxy-D-xylulose-5-phosphate synthase from Vibrio vulnificus (strain CMCP6).